A 106-amino-acid chain; its full sequence is Iron-sulfur cluster assembly protein CyaY (106 aa).

Belongs to the frataxin family.

In terms of biological role, involved in iron-sulfur (Fe-S) cluster assembly. May act as a regulator of Fe-S biogenesis. This chain is Iron-sulfur cluster assembly protein CyaY, found in Escherichia coli O9:H4 (strain HS).